Here is a 275-residue protein sequence, read N- to C-terminus: Large ribosomal subunit protein uL2 (275 aa).

Disordered regions lie at residues 1-20 (MAVKKYRPYTPSRRQMTTAD) and 214-275 (WLGR…TRRK). Residues 255-275 (KGLKTRRKRKTSDRFIVTRRK) are compositionally biased toward basic residues.

It belongs to the universal ribosomal protein uL2 family. In terms of assembly, part of the 50S ribosomal subunit. Forms a bridge to the 30S subunit in the 70S ribosome.

One of the primary rRNA binding proteins. Required for association of the 30S and 50S subunits to form the 70S ribosome, for tRNA binding and peptide bond formation. It has been suggested to have peptidyltransferase activity; this is somewhat controversial. Makes several contacts with the 16S rRNA in the 70S ribosome. The polypeptide is Large ribosomal subunit protein uL2 (rplB) (Deinococcus radiodurans (strain ATCC 13939 / DSM 20539 / JCM 16871 / CCUG 27074 / LMG 4051 / NBRC 15346 / NCIMB 9279 / VKM B-1422 / R1)).